Reading from the N-terminus, the 469-residue chain is Aspartyl/glutamyl-tRNA(Asn/Gln) amidotransferase subunit B (469 aa).

The protein belongs to the GatB/GatE family. GatB subfamily. As to quaternary structure, heterotrimer of A, B and C subunits.

It catalyses the reaction L-glutamyl-tRNA(Gln) + L-glutamine + ATP + H2O = L-glutaminyl-tRNA(Gln) + L-glutamate + ADP + phosphate + H(+). The catalysed reaction is L-aspartyl-tRNA(Asn) + L-glutamine + ATP + H2O = L-asparaginyl-tRNA(Asn) + L-glutamate + ADP + phosphate + 2 H(+). Its function is as follows. Allows the formation of correctly charged Asn-tRNA(Asn) or Gln-tRNA(Gln) through the transamidation of misacylated Asp-tRNA(Asn) or Glu-tRNA(Gln) in organisms which lack either or both of asparaginyl-tRNA or glutaminyl-tRNA synthetases. The reaction takes place in the presence of glutamine and ATP through an activated phospho-Asp-tRNA(Asn) or phospho-Glu-tRNA(Gln). In Methanococcus maripaludis (strain C7 / ATCC BAA-1331), this protein is Aspartyl/glutamyl-tRNA(Asn/Gln) amidotransferase subunit B.